The sequence spans 448 residues: Probable glycine dehydrogenase (decarboxylating) subunit 1 (448 aa).

This sequence belongs to the GcvP family. N-terminal subunit subfamily. As to quaternary structure, the glycine cleavage system is composed of four proteins: P, T, L and H. In this organism, the P 'protein' is a heterodimer of two subunits.

The enzyme catalyses N(6)-[(R)-lipoyl]-L-lysyl-[glycine-cleavage complex H protein] + glycine + H(+) = N(6)-[(R)-S(8)-aminomethyldihydrolipoyl]-L-lysyl-[glycine-cleavage complex H protein] + CO2. The glycine cleavage system catalyzes the degradation of glycine. The P protein binds the alpha-amino group of glycine through its pyridoxal phosphate cofactor; CO(2) is released and the remaining methylamine moiety is then transferred to the lipoamide cofactor of the H protein. This chain is Probable glycine dehydrogenase (decarboxylating) subunit 1, found in Staphylococcus aureus (strain COL).